Consider the following 358-residue polypeptide: Trace amine-associated receptor 7d (358 aa).

At methionine 1–arginine 47 the chain is on the extracellular side. Asparagine 34 carries an N-linked (GlcNAc...) asparagine glycan. 2 cysteine pairs are disulfide-bonded: cysteine 37–cysteine 201 and cysteine 120–cysteine 205. Residues leucine 48–valine 68 traverse the membrane as a helical segment. The Cytoplasmic segment spans residues methionine 69–asparagine 83. The helical transmembrane segment at phenylalanine 84 to serine 104 threads the bilayer. Residues methionine 105 to leucine 122 lie on the Extracellular side of the membrane. Residues histidine 123 to valine 143 traverse the membrane as a helical segment. Over aspartate 144–lysine 166 the chain is Cytoplasmic. The chain crosses the membrane as a helical span at residues cysteine 167–alanine 187. Residues serine 188–lysine 212 lie on the Extracellular side of the membrane. Residues phenylalanine 213–serine 233 form a helical membrane-spanning segment. Residues lysine 234–threonine 274 lie on the Cytoplasmic side of the membrane. A helical membrane pass occupies residues leucine 275 to isoleucine 295. Over aspartate 296–glutamate 309 the chain is Extracellular. The helical transmembrane segment at isoleucine 310–phenylalanine 333 threads the bilayer. Topologically, residues arginine 334 to glutamate 358 are cytoplasmic.

It belongs to the G-protein coupled receptor 1 family.

Its subcellular location is the cell membrane. In terms of biological role, olfactory receptor specific for N,N-dimethylalkylamines trace amines, such as N,N-dimethylcyclohexylamine. Trace amine compounds are enriched in animal body fluids and act on trace amine-associated receptors (TAARs) to elicit both intraspecific and interspecific innate behaviors. Ligand-binding causes a conformation change that triggers signaling via G(s)-class of G alpha proteins (GNAL or GNAS). The sequence is that of Trace amine-associated receptor 7d from Rattus norvegicus (Rat).